Consider the following 133-residue polypeptide: Lymphocyte antigen 6 complex locus protein G6d (133 aa).

The signal sequence occupies residues 1–19; that stretch reads MKPQFVGILLSSLLGAALG. Residues 22–116 form the UPAR/Ly6 domain; sequence MRCYNCGGSP…ASHVAPAGIL (95 aa). A disulfide bridge connects residues cysteine 27 and cysteine 35. O-linked (GalNAc...) threonine glycosylation is found at threonine 40 and threonine 41. Intrachain disulfides connect cysteine 42–cysteine 71 and cysteine 77–cysteine 96. Residue serine 104 is the site of GPI-anchor amidated serine attachment. The propeptide at 105 to 133 is removed in mature form; it reads AVASHVAPAGILAAAATALTCLLPGLWSG.

As to quaternary structure, homodimer. In terms of processing, O-glycosylated. Expressed in the adult lung, and in fetal liver, lung, kidney, brain and spleen.

It is found in the cell membrane. Its subcellular location is the cell projection. The protein localises to the filopodium. This is Lymphocyte antigen 6 complex locus protein G6d (LY6G6D) from Homo sapiens (Human).